Consider the following 313-residue polypeptide: NADH-ubiquinone oxidoreductase chain 1 (313 aa).

Helical transmembrane passes span 7–27, 73–93, 104–124, 150–170, 175–195, 226–246, 250–270, and 293–313; these read LIGSLLLVICVMVGVAFLTLL, IFYYFSPIFSLFLSLLIWMSM, LGVLFFLCITSLGVYTVMVAG, LALILLSFIFLIGNYNFLNFF, YMWFIVFCFPLGLVWFASCLA, LIFLAEYSSILFMSMLFSVIF, DIYSILFFFKLTIISFFFIWV, and MSLNYLFFFIGVKIFILSMLF.

It belongs to the complex I subunit 1 family.

Its subcellular location is the mitochondrion inner membrane. It carries out the reaction a ubiquinone + NADH + 5 H(+)(in) = a ubiquinol + NAD(+) + 4 H(+)(out). Functionally, core subunit of the mitochondrial membrane respiratory chain NADH dehydrogenase (Complex I) that is believed to belong to the minimal assembly required for catalysis. Complex I functions in the transfer of electrons from NADH to the respiratory chain. The immediate electron acceptor for the enzyme is believed to be ubiquinone. This Aedes aegypti (Yellowfever mosquito) protein is NADH-ubiquinone oxidoreductase chain 1.